Consider the following 105-residue polypeptide: Flower-specific defensin (105 aa).

The signal sequence occupies residues 1 to 25; the sequence is MARSLCFMAFAILAMMLFVAYEVQA. Cystine bridges form between Cys-28–Cys-72, Cys-39–Cys-59, Cys-45–Cys-66, and Cys-49–Cys-68. Positions 73 to 105 are cleaved as a propeptide — removed in mature form; the sequence is VFDEKMTKTGAEILAEEAKTLAAALLEEEIMDN.

Belongs to the DEFL family. As to expression, most abundant in the epidermal cell layers of the petals and sepals, within the connective cells of the anthers, and the cortical cells of the style. Not detected in the tapetum, pollen mother cells, the transmitting tissue, the vascular bundles of the anther and style or in leaves. Expressed also in ovaries, but barley detectable in roots.

The protein localises to the secreted. Its subcellular location is the vacuole. Plant defense peptide with antifungal activity against F.oxysporum and B.cinerea. Retards the growth of the Lepidopteran insect pests H.armigera and H.punctigera. The sequence is that of Flower-specific defensin (D1) from Nicotiana alata (Winged tobacco).